Consider the following 339-residue polypeptide: Exopolyphosphatase 1 (339 aa).

The segment at glutamine 315 to threonine 339 is disordered. A compositionally biased stretch (basic and acidic residues) spans arginine 319 to threonine 339.

This sequence belongs to the GppA/Ppx family. Homodimer.

The catalysed reaction is [phosphate](n) + H2O = [phosphate](n-1) + phosphate + H(+). In terms of biological role, degradation of inorganic polyphosphates (polyP). Releases orthophosphate processively from the ends of the polyP chain. In Mycobacterium leprae (strain TN), this protein is Exopolyphosphatase 1.